A 293-amino-acid polypeptide reads, in one-letter code: Glycine--tRNA ligase alpha subunit (293 aa).

The protein belongs to the class-II aminoacyl-tRNA synthetase family. Tetramer of two alpha and two beta subunits.

It localises to the cytoplasm. The catalysed reaction is tRNA(Gly) + glycine + ATP = glycyl-tRNA(Gly) + AMP + diphosphate. This Aliarcobacter butzleri (strain RM4018) (Arcobacter butzleri) protein is Glycine--tRNA ligase alpha subunit.